We begin with the raw amino-acid sequence, 180 residues long: Large ribosomal subunit protein uL5 (180 aa).

The protein belongs to the universal ribosomal protein uL5 family. Part of the 50S ribosomal subunit; part of the 5S rRNA/L5/L18/L25 subcomplex. Contacts the 5S rRNA and the P site tRNA. Forms a bridge to the 30S subunit in the 70S ribosome.

This is one of the proteins that bind and probably mediate the attachment of the 5S RNA into the large ribosomal subunit, where it forms part of the central protuberance. In the 70S ribosome it contacts protein S13 of the 30S subunit (bridge B1b), connecting the 2 subunits; this bridge is implicated in subunit movement. Contacts the P site tRNA; the 5S rRNA and some of its associated proteins might help stabilize positioning of ribosome-bound tRNAs. In Clostridium tetani (strain Massachusetts / E88), this protein is Large ribosomal subunit protein uL5.